Consider the following 424-residue polypeptide: Serine/threonine-protein kinase H1 (424 aa).

A lipid anchor (N-myristoyl glycine) is attached at G2. The S-palmitoyl cysteine moiety is linked to residue C3. The tract at residues A59–R79 is disordered. One can recognise a Protein kinase domain in the interval Y98–V355. ATP-binding positions include I104 to V112 and K127. The active-site Proton acceptor is the D218. The interval R378–E408 is disordered. A phosphoserine; by autocatalysis mark is found at S380 and S381. Over residues S381–T398 the composition is skewed to low complexity.

It belongs to the protein kinase superfamily. CAMK Ser/Thr protein kinase family. Homodimer. Post-translationally, autophosphorylated on serine residues. In terms of processing, myristoylated. Required for membrane association. Prerequisite for palmitoylation to occur. Palmitoylated.

The protein localises to the golgi apparatus. Its subcellular location is the cytoplasm. It localises to the cytoskeleton. The protein resides in the microtubule organizing center. It is found in the centrosome. The protein localises to the nucleus speckle. Its subcellular location is the endoplasmic reticulum membrane. It localises to the cell membrane. It catalyses the reaction L-seryl-[protein] + ATP = O-phospho-L-seryl-[protein] + ADP + H(+). The catalysed reaction is L-threonyl-[protein] + ATP = O-phospho-L-threonyl-[protein] + ADP + H(+). With respect to regulation, activity depends on Ca(2+) concentration. Serine/threonine protein kinase that may be involved in the regulation of pre-mRNA processing. It may phosphorylate components of nuclear splice factor compartments (SFC), such as non-snRNP splicing factors containing a serine/arginine-rich domain (SR proteins). Reversible phosphorylation of SR proteins may cause their release into the nucleoplasm and change their local concentration, thereby influencing alternative splicing. In Mus musculus (Mouse), this protein is Serine/threonine-protein kinase H1 (Pskh1).